A 321-amino-acid polypeptide reads, in one-letter code: Lipoyl synthase (321 aa).

[4Fe-4S] cluster is bound by residues Cys68, Cys73, Cys79, Cys94, Cys98, Cys101, and Ser308. A Radical SAM core domain is found at 80–297; the sequence is FNHGTATFMI…REFAESIGFT (218 aa).

This sequence belongs to the radical SAM superfamily. Lipoyl synthase family. It depends on [4Fe-4S] cluster as a cofactor.

It is found in the cytoplasm. It catalyses the reaction [[Fe-S] cluster scaffold protein carrying a second [4Fe-4S](2+) cluster] + N(6)-octanoyl-L-lysyl-[protein] + 2 oxidized [2Fe-2S]-[ferredoxin] + 2 S-adenosyl-L-methionine + 4 H(+) = [[Fe-S] cluster scaffold protein] + N(6)-[(R)-dihydrolipoyl]-L-lysyl-[protein] + 4 Fe(3+) + 2 hydrogen sulfide + 2 5'-deoxyadenosine + 2 L-methionine + 2 reduced [2Fe-2S]-[ferredoxin]. Its pathway is protein modification; protein lipoylation via endogenous pathway; protein N(6)-(lipoyl)lysine from octanoyl-[acyl-carrier-protein]: step 2/2. Its function is as follows. Catalyzes the radical-mediated insertion of two sulfur atoms into the C-6 and C-8 positions of the octanoyl moiety bound to the lipoyl domains of lipoate-dependent enzymes, thereby converting the octanoylated domains into lipoylated derivatives. The protein is Lipoyl synthase of Shewanella sediminis (strain HAW-EB3).